A 241-amino-acid polypeptide reads, in one-letter code: Probable transcriptional regulatory protein Daro_4067 (241 aa).

Positions 1–22 (MAGHSKWANIQHRKGRQDEKRG) are disordered.

This sequence belongs to the TACO1 family.

It is found in the cytoplasm. In Dechloromonas aromatica (strain RCB), this protein is Probable transcriptional regulatory protein Daro_4067.